Consider the following 141-residue polypeptide: Large ribosomal subunit protein uL11 (141 aa).

This sequence belongs to the universal ribosomal protein uL11 family. In terms of assembly, part of the ribosomal stalk of the 50S ribosomal subunit. Interacts with L10 and the large rRNA to form the base of the stalk. L10 forms an elongated spine to which L12 dimers bind in a sequential fashion forming a multimeric L10(L12)X complex. One or more lysine residues are methylated.

Forms part of the ribosomal stalk which helps the ribosome interact with GTP-bound translation factors. This Synechococcus elongatus (strain ATCC 33912 / PCC 7942 / FACHB-805) (Anacystis nidulans R2) protein is Large ribosomal subunit protein uL11.